A 473-amino-acid polypeptide reads, in one-letter code: Argininosuccinate lyase (473 aa).

It belongs to the lyase 1 family. Argininosuccinate lyase subfamily.

Its subcellular location is the cytoplasm. It carries out the reaction 2-(N(omega)-L-arginino)succinate = fumarate + L-arginine. The protein operates within amino-acid biosynthesis; L-arginine biosynthesis; L-arginine from L-ornithine and carbamoyl phosphate: step 3/3. The sequence is that of Argininosuccinate lyase from Bordetella pertussis (strain Tohama I / ATCC BAA-589 / NCTC 13251).